A 459-amino-acid chain; its full sequence is Uterine milk protein (459 aa).

An N-terminal signal peptide occupies residues 1-25; the sequence is MSHGRMNLALSLVFILCGLFNSIFC. N-linked (GlcNAc...) asparagine glycosylation occurs at asparagine 268.

It belongs to the serpin family. UTMP subfamily.

This chain is Uterine milk protein, found in Bos taurus (Bovine).